A 180-amino-acid polypeptide reads, in one-letter code: ATP synthase subunit delta (180 aa).

Belongs to the ATPase delta chain family. F-type ATPases have 2 components, F(1) - the catalytic core - and F(0) - the membrane proton channel. F(1) has five subunits: alpha(3), beta(3), gamma(1), delta(1), epsilon(1). CF(0) has four main subunits: a(1), b(1), b'(1) and c(10-14). The alpha and beta chains form an alternating ring which encloses part of the gamma chain. F(1) is attached to F(0) by a central stalk formed by the gamma and epsilon chains, while a peripheral stalk is formed by the delta, b and b' chains.

The protein resides in the cellular thylakoid membrane. Functionally, f(1)F(0) ATP synthase produces ATP from ADP in the presence of a proton or sodium gradient. F-type ATPases consist of two structural domains, F(1) containing the extramembraneous catalytic core and F(0) containing the membrane proton channel, linked together by a central stalk and a peripheral stalk. During catalysis, ATP synthesis in the catalytic domain of F(1) is coupled via a rotary mechanism of the central stalk subunits to proton translocation. This protein is part of the stalk that links CF(0) to CF(1). It either transmits conformational changes from CF(0) to CF(1) or is implicated in proton conduction. In Prochlorococcus marinus (strain AS9601), this protein is ATP synthase subunit delta.